A 192-amino-acid chain; its full sequence is Interferon epsilon (192 aa).

Positions 1-21 (MVHRQLPETVLLLLVSSTIFS) are cleaved as a signal peptide. A disulfide bond links Cys-52 and Cys-162.

It belongs to the alpha/beta interferon family. In terms of tissue distribution, expressed at very high levels in uterus and, at much lower levels, in ovary and cervix. Very low levels, if any, in other organs. In the endometrium, expressed in the luminal and glandular epithelial cells (at protein level).

The protein resides in the secreted. Its function is as follows. Type I interferon required for maintaining basal levels of IFN-regulated genes, including 2'-5'-oligoadenylate synthetase, IRF7 and ISG15, in the female reproductive tract. Directly mediates protection against viral, including HSV-2, and bacterial, including Chlamydia muridarum, genital infections. The chain is Interferon epsilon (Ifne) from Mus musculus (Mouse).